Reading from the N-terminus, the 551-residue chain is Solute carrier family 22 member 27 (551 aa).

Topologically, residues 1-15 (MSFQELLNQVGSLGR) are cytoplasmic. Residues 16–36 (FQILQIVFLLLLNAIVVPHIA) form a helical membrane-spanning segment. Residues 37–145 (MENFTAAIPN…DLVCESQALN (109 aa)) lie on the Extracellular side of the membrane. N39, N56, N62, N102, and N107 each carry an N-linked (GlcNAc...) asparagine glycan. The helical transmembrane segment at 146 to 166 (SVTKFSFMIGLFIGGIICGHL) threads the bilayer. Residues 167–173 (SDRLGRK) are Cytoplasmic-facing. The chain crosses the membrane as a helical span at residues 174–194 (FILTCALLQFAITETCVAFAP). Residues 195-203 (SFFIYCSLR) lie on the Extracellular side of the membrane. Residues 204-224 (FLAGLSVEPILVNSHLLMLEW) traverse the membrane as a helical segment. Topologically, residues 225–234 (TSPKFLTMMA) are cytoplasmic. A helical membrane pass occupies residues 235–255 (ALLSCAPNIGYMISAGLAFLF). At 256 to 258 (RIW) the chain is on the extracellular side. The helical transmembrane segment at 259–279 (HHLQLTMSVPIFFFLILTRWL) threads the bilayer. At 280–348 (SESARWLIVT…LFHTSILRKR (69 aa)) the chain is on the cytoplasmic side. A helical transmembrane segment spans residues 349–369 (ICVLSFMRLFFTVSIFGLAVH). The Extracellular segment spans residues 370 to 376 (LQHLSSN). A helical transmembrane segment spans residues 377-397 (IILLQFLISALAILVSVIGPF). Topologically, residues 398–405 (VLNHIGRR) are cytoplasmic. The chain crosses the membrane as a helical span at residues 406-426 (ITYLVLMSLRGIFILIAVFVP). Topologically, residues 427–432 (QEMQTL) are extracellular. The helical transmembrane segment at 433–453 (RIIMATLAEGISSLCVGVSRL) threads the bilayer. Residues 454-467 (HTNELLPTTLRATA) are Cytoplasmic-facing. Residues 468-488 (VGVIGFFGNSGSFLSPLFMLL) form a helical membrane-spanning segment. Over 489-494 (ATYYAN) the chain is Extracellular. A helical membrane pass occupies residues 495–515 (MPWIFYGGFSIFNAFTVFLLP). The Cytoplasmic segment spans residues 516 to 551 (ETKNQPLPDSTHDVGNDWKESRKGKKEDPIIKVTRF). The segment at 523–551 (PDSTHDVGNDWKESRKGKKEDPIIKVTRF) is disordered. Residues 525–545 (STHDVGNDWKESRKGKKEDPI) show a composition bias toward basic and acidic residues.

The protein belongs to the major facilitator (TC 2.A.1) superfamily. Organic cation transporter (TC 2.A.1.19) family. As to expression, expressed in proximal kidney tubules, and in liver hepatocytes (at protein level).

It localises to the cell membrane. In terms of biological role, does not appear to have transporter activity. Its function is as follows. Sodium-independent organic anion transporter which exhibits high specificity for L-carnitine. Can also transport salicylic acid and the drug cimetidine. The sequence is that of Solute carrier family 22 member 27 from Mus musculus (Mouse).